A 212-amino-acid polypeptide reads, in one-letter code: ATP-dependent dethiobiotin synthetase BioD (212 aa).

13 to 18 (GIGKTV) lines the ATP pocket. Thr-17 contacts Mg(2+). Residue Lys-33 is part of the active site. Residue Ser-37 coordinates substrate. Glu-100 provides a ligand contact to Mg(2+). ATP contacts are provided by residues 100 to 103 (EGAG) and 184 to 186 (PRL).

This sequence belongs to the dethiobiotin synthetase family. As to quaternary structure, homodimer. It depends on Mg(2+) as a cofactor.

It is found in the cytoplasm. It carries out the reaction (7R,8S)-7,8-diammoniononanoate + CO2 + ATP = (4R,5S)-dethiobiotin + ADP + phosphate + 3 H(+). Its pathway is cofactor biosynthesis; biotin biosynthesis; biotin from 7,8-diaminononanoate: step 1/2. In terms of biological role, catalyzes a mechanistically unusual reaction, the ATP-dependent insertion of CO2 between the N7 and N8 nitrogen atoms of 7,8-diaminopelargonic acid (DAPA, also called 7,8-diammoniononanoate) to form a ureido ring. In Brucella anthropi (strain ATCC 49188 / DSM 6882 / CCUG 24695 / JCM 21032 / LMG 3331 / NBRC 15819 / NCTC 12168 / Alc 37) (Ochrobactrum anthropi), this protein is ATP-dependent dethiobiotin synthetase BioD.